The sequence spans 276 residues: Pantothenate synthetase (276 aa).

27 to 34 contributes to the ATP binding site; the sequence is MGALHKGH. The Proton donor role is filled by H34. Residue Q58 coordinates (R)-pantoate. Residue Q58 coordinates beta-alanine. ATP is bound at residue 147–150; the sequence is GKKD. (R)-pantoate is bound at residue Q153. ATP-binding positions include V176 and 184 to 187; that span reads LSSR.

Belongs to the pantothenate synthetase family. Homodimer.

Its subcellular location is the cytoplasm. It carries out the reaction (R)-pantoate + beta-alanine + ATP = (R)-pantothenate + AMP + diphosphate + H(+). It participates in cofactor biosynthesis; (R)-pantothenate biosynthesis; (R)-pantothenate from (R)-pantoate and beta-alanine: step 1/1. Its function is as follows. Catalyzes the condensation of pantoate with beta-alanine in an ATP-dependent reaction via a pantoyl-adenylate intermediate. This is Pantothenate synthetase from Helicobacter pylori (strain ATCC 700392 / 26695) (Campylobacter pylori).